Consider the following 214-residue polypeptide: Ras-related protein Rab2BV (214 aa).

Residue 19–26 (GDSGVGKS) coordinates GTP. Residues 41-49 (SKSTIGVEF) carry the Effector region motif. GTP contacts are provided by residues 67-71 (DTAGQ) and 125-128 (NKSD). Residues cysteine 211 and cysteine 212 are each lipidated (S-geranylgeranyl cysteine).

The protein belongs to the small GTPase superfamily. Rab family.

The protein resides in the cell membrane. In Beta vulgaris (Sugar beet), this protein is Ras-related protein Rab2BV (RAB2BV).